A 675-amino-acid polypeptide reads, in one-letter code: UvrABC system protein B (675 aa).

The Helicase ATP-binding domain occupies 32 to 417 (EGLSDGLAYQ…EHAGQVVEQV (386 aa)). 45 to 52 (GVTGSGKT) serves as a coordination point for ATP. A Beta-hairpin motif is present at residues 98–121 (YYDYYQPEAYVPSRDLFIEKDSAI). The Helicase C-terminal domain occupies 436–602 (QVDDLMSEIN…QIKKQVKDII (167 aa)). The 36-residue stretch at 634 to 669 (IKEIAKLEKAMQQAARDLQFEEAAVLRDRIRNIKEN) folds into the UVR domain.

This sequence belongs to the UvrB family. Forms a heterotetramer with UvrA during the search for lesions. Interacts with UvrC in an incision complex.

The protein resides in the cytoplasm. The UvrABC repair system catalyzes the recognition and processing of DNA lesions. A damage recognition complex composed of 2 UvrA and 2 UvrB subunits scans DNA for abnormalities. Upon binding of the UvrA(2)B(2) complex to a putative damaged site, the DNA wraps around one UvrB monomer. DNA wrap is dependent on ATP binding by UvrB and probably causes local melting of the DNA helix, facilitating insertion of UvrB beta-hairpin between the DNA strands. Then UvrB probes one DNA strand for the presence of a lesion. If a lesion is found the UvrA subunits dissociate and the UvrB-DNA preincision complex is formed. This complex is subsequently bound by UvrC and the second UvrB is released. If no lesion is found, the DNA wraps around the other UvrB subunit that will check the other stand for damage. This chain is UvrABC system protein B, found in Neisseria gonorrhoeae.